The sequence spans 156 residues: Snaclec A5 (156 aa).

A signal peptide spans 1–23; it reads MGRSISVSFGLLVVFLSLSGTGA. Cystine bridges form between Cys-27–Cys-38, Cys-55–Cys-154, and Cys-129–Cys-146. Residues 34–155 form the C-type lectin domain; it reads HEGHCYKVFN…CGKPYRFTCE (122 aa).

Belongs to the snaclec family. As to quaternary structure, heterodimer; disulfide-linked. Expressed by the venom gland.

Its subcellular location is the secreted. In terms of biological role, interferes with one step of hemostasis (modulation of platelet aggregation, or coagulation cascade, for example). This Macrovipera lebetinus (Levantine viper) protein is Snaclec A5.